Reading from the N-terminus, the 370-residue chain is 2-aminoethylphosphonate--pyruvate transaminase 2 (370 aa).

N6-(pyridoxal phosphate)lysine is present on Lys-194.

This sequence belongs to the class-V pyridoxal-phosphate-dependent aminotransferase family. PhnW subfamily. Homodimer. Requires pyridoxal 5'-phosphate as cofactor.

The enzyme catalyses (2-aminoethyl)phosphonate + pyruvate = phosphonoacetaldehyde + L-alanine. In terms of biological role, involved in phosphonate degradation. This is 2-aminoethylphosphonate--pyruvate transaminase 2 from Paraburkholderia xenovorans (strain LB400).